Consider the following 391-residue polypeptide: S-adenosylmethionine synthase (391 aa).

His14 contributes to the ATP binding site. Asp16 serves as a coordination point for Mg(2+). A K(+)-binding site is contributed by Glu42. L-methionine-binding residues include Glu55 and Gln98. Residues 98–108 are flexible loop; sequence QSVDIAMGVDE. Residues 172-174, 238-239, Asp247, 253-254, Ala270, and Lys274 contribute to the ATP site; these read DGK, RF, and RK. Residue Asp247 participates in L-methionine binding. Lys278 contributes to the L-methionine binding site.

This sequence belongs to the AdoMet synthase family. As to quaternary structure, homotetramer; dimer of dimers. It depends on Mg(2+) as a cofactor. The cofactor is K(+).

The protein resides in the cytoplasm. The enzyme catalyses L-methionine + ATP + H2O = S-adenosyl-L-methionine + phosphate + diphosphate. Its pathway is amino-acid biosynthesis; S-adenosyl-L-methionine biosynthesis; S-adenosyl-L-methionine from L-methionine: step 1/1. Functionally, catalyzes the formation of S-adenosylmethionine (AdoMet) from methionine and ATP. The overall synthetic reaction is composed of two sequential steps, AdoMet formation and the subsequent tripolyphosphate hydrolysis which occurs prior to release of AdoMet from the enzyme. This is S-adenosylmethionine synthase from Clostridium botulinum (strain Langeland / NCTC 10281 / Type F).